The chain runs to 251 residues: MSVTMRQMLEAGVHFGHQTRFWNPKMAPYIFGQRNKIHIVNLEHTLVMLREALDYARRLTANKGTILFVGTKRQARDIVMEEAIRCGAPYVNQRWLGGMLTNFKTIRQSIKRLQDMEKMVQDGTLNKLTKKEALDFQRELEKLNNSLGGIKEMKGLPDAMFVIDVGYQKGAIVEADKLGIPVVGVVDTNHSPAGVRYVVPGNDDSSQAIRLYARAMADAILEGRNQSVQEIIEMSKSDDEIMSGRDQSAGA.

Belongs to the universal ribosomal protein uS2 family.

The sequence is that of Small ribosomal subunit protein uS2 from Nitrosomonas europaea (strain ATCC 19718 / CIP 103999 / KCTC 2705 / NBRC 14298).